The primary structure comprises 347 residues: Protein RecA (347 aa).

66–73 (GPESSGKT) serves as a coordination point for ATP.

This sequence belongs to the RecA family.

The protein localises to the cytoplasm. In terms of biological role, can catalyze the hydrolysis of ATP in the presence of single-stranded DNA, the ATP-dependent uptake of single-stranded DNA by duplex DNA, and the ATP-dependent hybridization of homologous single-stranded DNAs. It interacts with LexA causing its activation and leading to its autocatalytic cleavage. In Burkholderia cepacia (Pseudomonas cepacia), this protein is Protein RecA.